A 68-amino-acid chain; its full sequence is uncharacterized protein (68 aa).

This is an uncharacterized protein from Enterobacteria phage T4 (Bacteriophage T4).